A 174-amino-acid chain; its full sequence is NAD(P)H-quinone oxidoreductase subunit J (174 aa).

The protein belongs to the complex I 30 kDa subunit family. As to quaternary structure, NDH-1 can be composed of about 15 different subunits; different subcomplexes with different compositions have been identified which probably have different functions.

It localises to the cellular thylakoid membrane. It catalyses the reaction a plastoquinone + NADH + (n+1) H(+)(in) = a plastoquinol + NAD(+) + n H(+)(out). The enzyme catalyses a plastoquinone + NADPH + (n+1) H(+)(in) = a plastoquinol + NADP(+) + n H(+)(out). Functionally, NDH-1 shuttles electrons from an unknown electron donor, via FMN and iron-sulfur (Fe-S) centers, to quinones in the respiratory and/or the photosynthetic chain. The immediate electron acceptor for the enzyme in this species is believed to be plastoquinone. Couples the redox reaction to proton translocation, and thus conserves the redox energy in a proton gradient. Cyanobacterial NDH-1 also plays a role in inorganic carbon-concentration. This Picosynechococcus sp. (strain ATCC 27264 / PCC 7002 / PR-6) (Agmenellum quadruplicatum) protein is NAD(P)H-quinone oxidoreductase subunit J.